The chain runs to 135 residues: Photosystem II extrinsic protein U (135 aa).

A signal peptide spans 1-26 (MKNLVRLLAVIALIIGSFWGKVPAQA).

It belongs to the PsbU family. As to quaternary structure, PSII is composed of 1 copy each of membrane proteins PsbA, PsbB, PsbC, PsbD, PsbE, PsbF, PsbH, PsbI, PsbJ, PsbK, PsbL, PsbM, PsbT, PsbX, PsbY, PsbZ, Psb30/Ycf12, peripheral proteins PsbO, CyanoQ (PsbQ), PsbU, PsbV and a large number of cofactors. It forms dimeric complexes.

The protein localises to the cellular thylakoid membrane. In terms of biological role, one of the extrinsic, lumenal subunits of photosystem II (PSII). PSII is a light-driven water plastoquinone oxidoreductase, using light energy to abstract electrons from H(2)O, generating a proton gradient subsequently used for ATP formation. The extrinsic proteins stabilize the structure of photosystem II oxygen-evolving complex (OEC), the ion environment of oxygen evolution and protect the OEC against heat-induced inactivation. This chain is Photosystem II extrinsic protein U, found in Microcystis aeruginosa (strain NIES-843 / IAM M-2473).